Reading from the N-terminus, the 414-residue chain is Adenylosuccinate synthetase (414 aa).

Residues 12–18 (GDEGKGK) and 40–42 (GHT) contribute to the GTP site. Catalysis depends on aspartate 13, which acts as the Proton acceptor. Mg(2+) contacts are provided by aspartate 13 and glycine 40. IMP contacts are provided by residues 13–16 (DEGK), 38–41 (NAGH), threonine 124, arginine 138, glutamine 216, threonine 231, and arginine 297. The active-site Proton donor is histidine 41. Residue 293–299 (STTGRPR) participates in substrate binding. GTP contacts are provided by residues arginine 299, 325–327 (KLD), and 403–405 (STG).

The protein belongs to the adenylosuccinate synthetase family. As to quaternary structure, homodimer. Requires Mg(2+) as cofactor.

The protein resides in the cytoplasm. The catalysed reaction is IMP + L-aspartate + GTP = N(6)-(1,2-dicarboxyethyl)-AMP + GDP + phosphate + 2 H(+). It participates in purine metabolism; AMP biosynthesis via de novo pathway; AMP from IMP: step 1/2. Functionally, plays an important role in the de novo pathway of purine nucleotide biosynthesis. Catalyzes the first committed step in the biosynthesis of AMP from IMP. The chain is Adenylosuccinate synthetase from Hydrogenobaculum sp. (strain Y04AAS1).